Here is a 95-residue protein sequence, read N- to C-terminus: MNDVLNSGAFSLASLIVSMVVLVVGLALWFFVNRASSRANEQIELLEALLDQQKRQNALLRRLCEANEPEKEAEPATAASEPKEDEDIIRLVAER.

A helical membrane pass occupies residues 12-32 (LASLIVSMVVLVVGLALWFFV). The tract at residues 66–87 (ANEPEKEAEPATAASEPKEDED) is disordered.

It is found in the cell membrane. This is an uncharacterized protein from Salmonella typhi.